Reading from the N-terminus, the 132-residue chain is Small ribosomal subunit protein uS8 (132 aa).

This sequence belongs to the universal ribosomal protein uS8 family. As to quaternary structure, part of the 30S ribosomal subunit. Contacts proteins S5 and S12.

Functionally, one of the primary rRNA binding proteins, it binds directly to 16S rRNA central domain where it helps coordinate assembly of the platform of the 30S subunit. In Maricaulis maris (strain MCS10) (Caulobacter maris), this protein is Small ribosomal subunit protein uS8.